The primary structure comprises 212 residues: Pyridoxine/pyridoxamine 5'-phosphate oxidase (212 aa).

Residues 8-11 (RRSY) and Lys-66 each bind substrate. FMN-binding positions include 61 to 66 (RIVLLK), 76 to 77 (FT), Arg-82, Lys-83, and Gln-105. Tyr-123, Arg-127, and Ser-131 together coordinate substrate. FMN-binding positions include 140-141 (QS) and Trp-184. A substrate-binding site is contributed by 190–192 (RLH). Residue Arg-194 coordinates FMN.

Belongs to the pyridoxamine 5'-phosphate oxidase family. Homodimer. FMN is required as a cofactor.

The enzyme catalyses pyridoxamine 5'-phosphate + O2 + H2O = pyridoxal 5'-phosphate + H2O2 + NH4(+). It carries out the reaction pyridoxine 5'-phosphate + O2 = pyridoxal 5'-phosphate + H2O2. It participates in cofactor metabolism; pyridoxal 5'-phosphate salvage; pyridoxal 5'-phosphate from pyridoxamine 5'-phosphate: step 1/1. It functions in the pathway cofactor metabolism; pyridoxal 5'-phosphate salvage; pyridoxal 5'-phosphate from pyridoxine 5'-phosphate: step 1/1. Its function is as follows. Catalyzes the oxidation of either pyridoxine 5'-phosphate (PNP) or pyridoxamine 5'-phosphate (PMP) into pyridoxal 5'-phosphate (PLP). The sequence is that of Pyridoxine/pyridoxamine 5'-phosphate oxidase from Cupriavidus necator (strain ATCC 17699 / DSM 428 / KCTC 22496 / NCIMB 10442 / H16 / Stanier 337) (Ralstonia eutropha).